Here is a 185-residue protein sequence, read N- to C-terminus: Hypoxanthine/guanine phosphoribosyltransferase (185 aa).

This sequence belongs to the purine/pyrimidine phosphoribosyltransferase family. Archaeal HPRT subfamily. As to quaternary structure, homodimer.

The protein resides in the cytoplasm. The enzyme catalyses IMP + diphosphate = hypoxanthine + 5-phospho-alpha-D-ribose 1-diphosphate. It carries out the reaction GMP + diphosphate = guanine + 5-phospho-alpha-D-ribose 1-diphosphate. It functions in the pathway purine metabolism; IMP biosynthesis via salvage pathway; IMP from hypoxanthine: step 1/1. Functionally, catalyzes a salvage reaction resulting in the formation of IMP that is energically less costly than de novo synthesis. This chain is Hypoxanthine/guanine phosphoribosyltransferase, found in Methanococcus maripaludis (strain C5 / ATCC BAA-1333).